A 141-amino-acid polypeptide reads, in one-letter code: Large ribosomal subunit protein uL11 (141 aa).

This sequence belongs to the universal ribosomal protein uL11 family. As to quaternary structure, part of the ribosomal stalk of the 50S ribosomal subunit. Interacts with L10 and the large rRNA to form the base of the stalk. L10 forms an elongated spine to which L12 dimers bind in a sequential fashion forming a multimeric L10(L12)X complex. Post-translationally, one or more lysine residues are methylated.

In terms of biological role, forms part of the ribosomal stalk which helps the ribosome interact with GTP-bound translation factors. The protein is Large ribosomal subunit protein uL11 of Chlamydia felis (strain Fe/C-56) (Chlamydophila felis).